We begin with the raw amino-acid sequence, 581 residues long: Mitosis inhibitor protein kinase mik1 (581 aa).

Disordered regions lie at residues 43–71 (GHEENQSHKSSKLTFFKPSNTKRSPHTPM) and 148–178 (NLTNPRSEQPHTPCKKGTKIKLKPPQSPLSP). Residues 59–71 (KPSNTKRSPHTPM) show a composition bias toward polar residues. Positions 160–169 (PCKKGTKIKL) are enriched in basic residues. One can recognise a Protein kinase domain in the interval 289–561 (FQQVKPIHES…LLAMPEMIFI (273 aa)). ATP contacts are provided by residues 295–303 (IHESDFSFV) and Lys-320. Residue Asp-417 is the Proton acceptor of the active site. The Mg(2+) site is built by Asn-422 and Asp-435.

It belongs to the protein kinase superfamily. Ser/Thr protein kinase family. WEE1 subfamily.

It catalyses the reaction L-seryl-[protein] + ATP = O-phospho-L-seryl-[protein] + ADP + H(+). It carries out the reaction L-threonyl-[protein] + ATP = O-phospho-L-threonyl-[protein] + ADP + H(+). Protein kinase that acts both on serines and on tyrosines. It acts as a negative regulator of entry into mitosis (G2 to M transition). Phosphorylates and inhibits cdc2. This chain is Mitosis inhibitor protein kinase mik1 (mik1), found in Schizosaccharomyces pombe (strain 972 / ATCC 24843) (Fission yeast).